The following is a 336-amino-acid chain: 3-isopropylmalate dehydrogenase (336 aa).

Residues Arg87, Arg97, Arg121, and Asp211 each coordinate substrate. Residues Asp211, Asp235, and Asp239 each coordinate Mg(2+). 271-283 (GSAPDIAGQGIAD) contacts NAD(+).

This sequence belongs to the isocitrate and isopropylmalate dehydrogenases family. LeuB type 2 subfamily. As to quaternary structure, homodimer. Mg(2+) serves as cofactor. It depends on Mn(2+) as a cofactor.

It localises to the cytoplasm. The enzyme catalyses (2R,3S)-3-isopropylmalate + NAD(+) = 4-methyl-2-oxopentanoate + CO2 + NADH. It functions in the pathway amino-acid biosynthesis; L-leucine biosynthesis; L-leucine from 3-methyl-2-oxobutanoate: step 3/4. Catalyzes the oxidation of 3-carboxy-2-hydroxy-4-methylpentanoate (3-isopropylmalate) to 3-carboxy-4-methyl-2-oxopentanoate. The product decarboxylates to 4-methyl-2 oxopentanoate. This chain is 3-isopropylmalate dehydrogenase, found in Mycobacterium sp. (strain JLS).